Here is a 256-residue protein sequence, read N- to C-terminus: MLLVIDVGNSNIVLGIYDNERLVRDWRVSTDKSKTPDEYGILVHDLFRLAGIGFSDIKDIIISSVVPTLTGALEKLSRQYFGFKPYVVGPGIKTGMPIQYDNPKEVGADRIVNAVAGFEKHHCALIIVDFGTATTFDYVNKRGEYCGGAIAPGLMISMEALFQKASKLPRVEIAKPPAIIAKNTVNSMQAGIYYGYVGLVDGIVTRMKGEGKDNPRVIATGGLAGLIAPESATIEEVDEYLTLEGLRILYQRNRET.

An ATP-binding site is contributed by 6–13 (DVGNSNIV). Substrate-binding positions include Y100 and 107–110 (GADR). D109 acts as the Proton acceptor in catalysis. Position 129 (D129) interacts with K(+). T132 contacts ATP. T184 contacts substrate.

The protein belongs to the type III pantothenate kinase family. Homodimer. NH4(+) serves as cofactor. Requires K(+) as cofactor.

The protein localises to the cytoplasm. It carries out the reaction (R)-pantothenate + ATP = (R)-4'-phosphopantothenate + ADP + H(+). Its pathway is cofactor biosynthesis; coenzyme A biosynthesis; CoA from (R)-pantothenate: step 1/5. Catalyzes the phosphorylation of pantothenate (Pan), the first step in CoA biosynthesis. The polypeptide is Type III pantothenate kinase (Geotalea uraniireducens (strain Rf4) (Geobacter uraniireducens)).